The following is a 76-amino-acid chain: Acyl carrier protein (76 aa).

Positions 1-76 (MSVEEKISKI…DAIAYIKNKQ (76 aa)) constitute a Carrier domain. Residue serine 36 is modified to O-(pantetheine 4'-phosphoryl)serine.

It belongs to the acyl carrier protein (ACP) family. 4'-phosphopantetheine is transferred from CoA to a specific serine of apo-ACP by AcpS. This modification is essential for activity because fatty acids are bound in thioester linkage to the sulfhydryl of the prosthetic group.

It is found in the cytoplasm. The protein operates within lipid metabolism; fatty acid biosynthesis. Its function is as follows. Carrier of the growing fatty acid chain in fatty acid biosynthesis. The polypeptide is Acyl carrier protein (Nitratidesulfovibrio vulgaris (strain DSM 19637 / Miyazaki F) (Desulfovibrio vulgaris)).